Consider the following 122-residue polypeptide: Nodulation protein NolR (122 aa).

An HTH arsR-type domain is found at 15 to 109 (EKHEDAEIAA…ALSDIYGDDT (95 aa)). A DNA-binding region (H-T-H motif) is located at residues 49–68 (VGALAHKVGLSQSALSQHLS).

As to quaternary structure, binds to the operator site in homodimeric form.

Negative transacting factor controlling the nod regulon. May control the expression of nodD1, nodD2, nodD3 and nodABC genes. The sequence is that of Nodulation protein NolR (nolR) from Rhizobium meliloti (Ensifer meliloti).